The primary structure comprises 327 residues: Zinc transport protein ZntB (327 aa).

Over 1–273 (MEAIKGSDVN…ARRTYTMSLM (273 aa)) the chain is Cytoplasmic. A helical membrane pass occupies residues 274-294 (AMVFLPSTFLTGLFGVNLGGI). At 295-300 (PGGGWQ) the chain is on the periplasmic side. A helical membrane pass occupies residues 301–321 (FGFSIFCILLVVLIGGVALWL). The Cytoplasmic segment spans residues 322-327 (HRSKWL).

The protein belongs to the CorA metal ion transporter (MIT) (TC 1.A.35) family.

It is found in the cell inner membrane. It catalyses the reaction Zn(2+)(out) + H(+)(out) = Zn(2+)(in) + H(+)(in). Its function is as follows. Zinc transporter. Acts as a Zn(2+):proton symporter, which likely mediates zinc ion uptake. The chain is Zinc transport protein ZntB from Escherichia coli O8 (strain IAI1).